Reading from the N-terminus, the 197-residue chain is ATP-dependent Clp protease proteolytic subunit 2 (197 aa).

The Nucleophile role is filled by Ser-96. His-121 is an active-site residue.

It belongs to the peptidase S14 family. In terms of assembly, fourteen ClpP subunits assemble into 2 heptameric rings which stack back to back to give a disk-like structure with a central cavity, resembling the structure of eukaryotic proteasomes.

The protein localises to the cytoplasm. It carries out the reaction Hydrolysis of proteins to small peptides in the presence of ATP and magnesium. alpha-casein is the usual test substrate. In the absence of ATP, only oligopeptides shorter than five residues are hydrolyzed (such as succinyl-Leu-Tyr-|-NHMec, and Leu-Tyr-Leu-|-Tyr-Trp, in which cleavage of the -Tyr-|-Leu- and -Tyr-|-Trp bonds also occurs).. In terms of biological role, cleaves peptides in various proteins in a process that requires ATP hydrolysis. Has a chymotrypsin-like activity. Plays a major role in the degradation of misfolded proteins. This is ATP-dependent Clp protease proteolytic subunit 2 from Synechococcus sp. (strain CC9605).